The following is a 276-amino-acid chain: Mitochondrial outer membrane protein porin 6 (276 aa).

Belongs to the eukaryotic mitochondrial porin (TC 1.B.8.1) family.

It is found in the mitochondrion outer membrane. Functionally, forms a channel through the mitochondrial outer membrane that allows diffusion of small hydrophilic molecules. The channel adopts an open conformation at low or zero membrane potential and a closed conformation at potentials above 30-40 mV. The open state has a weak anion selectivity whereas the closed state is cation-selective. The sequence is that of Mitochondrial outer membrane protein porin 6 (VDAC6) from Oryza sativa subsp. japonica (Rice).